The primary structure comprises 194 residues: Peptidyl-tRNA hydrolase (194 aa).

Tyr-17 lines the tRNA pocket. The active-site Proton acceptor is His-22. TRNA is bound by residues Tyr-68, Asn-70, and Asn-116.

Belongs to the PTH family. As to quaternary structure, monomer.

The protein localises to the cytoplasm. The enzyme catalyses an N-acyl-L-alpha-aminoacyl-tRNA + H2O = an N-acyl-L-amino acid + a tRNA + H(+). Its function is as follows. Hydrolyzes ribosome-free peptidyl-tRNAs (with 1 or more amino acids incorporated), which drop off the ribosome during protein synthesis, or as a result of ribosome stalling. Functionally, catalyzes the release of premature peptidyl moieties from peptidyl-tRNA molecules trapped in stalled 50S ribosomal subunits, and thus maintains levels of free tRNAs and 50S ribosomes. The protein is Peptidyl-tRNA hydrolase of Marinomonas sp. (strain MWYL1).